The following is a 1382-amino-acid chain: DNA-directed RNA polymerase subunit beta'' (1382 aa).

Residues cysteine 224, cysteine 294, cysteine 301, and cysteine 304 each coordinate Zn(2+).

The protein belongs to the RNA polymerase beta' chain family. RpoC2 subfamily. In plastids the minimal PEP RNA polymerase catalytic core is composed of four subunits: alpha, beta, beta', and beta''. When a (nuclear-encoded) sigma factor is associated with the core the holoenzyme is formed, which can initiate transcription. Zn(2+) serves as cofactor.

The protein localises to the plastid. The protein resides in the chloroplast. It catalyses the reaction RNA(n) + a ribonucleoside 5'-triphosphate = RNA(n+1) + diphosphate. In terms of biological role, DNA-dependent RNA polymerase catalyzes the transcription of DNA into RNA using the four ribonucleoside triphosphates as substrates. This chain is DNA-directed RNA polymerase subunit beta'', found in Liriodendron tulipifera (Tuliptree).